We begin with the raw amino-acid sequence, 171 residues long: ATP synthase subunit b (171 aa).

The helical transmembrane segment at 2–22 (FVVKMVLGFLILLSPLCATGL) threads the bilayer.

The protein belongs to the ATPase B chain family. As to quaternary structure, F-type ATPases have 2 components, F(1) - the catalytic core - and F(0) - the membrane proton channel. F(1) has five subunits: alpha(3), beta(3), gamma(1), delta(1), epsilon(1). F(0) has three main subunits: a(1), b(2) and c(10-14). The alpha and beta chains form an alternating ring which encloses part of the gamma chain. F(1) is attached to F(0) by a central stalk formed by the gamma and epsilon chains, while a peripheral stalk is formed by the delta and b chains.

The protein resides in the cell inner membrane. In terms of biological role, f(1)F(0) ATP synthase produces ATP from ADP in the presence of a proton or sodium gradient. F-type ATPases consist of two structural domains, F(1) containing the extramembraneous catalytic core and F(0) containing the membrane proton channel, linked together by a central stalk and a peripheral stalk. During catalysis, ATP synthesis in the catalytic domain of F(1) is coupled via a rotary mechanism of the central stalk subunits to proton translocation. Component of the F(0) channel, it forms part of the peripheral stalk, linking F(1) to F(0). This chain is ATP synthase subunit b, found in Helicobacter pylori (strain G27).